The chain runs to 562 residues: tRNA (guanine(37)-N(1))-methyltransferase (562 aa).

The transit peptide at Met-1 to Gly-41 directs the protein to the mitochondrion. Residues His-243, Asp-281–Leu-282, and Asn-340 contribute to the S-adenosyl-L-methionine site. Over residues Ala-523–Pro-534 the composition is skewed to basic and acidic residues. A disordered region spans residues Ala-523 to Met-562.

The protein belongs to the class I-like SAM-binding methyltransferase superfamily. TRM5/TYW2 family. Monomer.

The protein localises to the mitochondrion matrix. It localises to the nucleus. It is found in the cytoplasm. It carries out the reaction guanosine(37) in tRNA + S-adenosyl-L-methionine = N(1)-methylguanosine(37) in tRNA + S-adenosyl-L-homocysteine + H(+). Its function is as follows. Specifically methylates the N1 position of guanosine-37 in various cytoplasmic and mitochondrial tRNAs. Methylation is not dependent on the nature of the nucleoside 5' of the target nucleoside. This is the first step in the biosynthesis of wybutosine (yW), a modified base adjacent to the anticodon of tRNAs and required for accurate decoding. This is tRNA (guanine(37)-N(1))-methyltransferase from Aedes aegypti (Yellowfever mosquito).